We begin with the raw amino-acid sequence, 397 residues long: Mesoderm posterior protein 2 (397 aa).

Disordered stretches follow at residues 28–92 (WDST…REKL), 152–208 (QRGD…GRRP), 222–295 (SPSA…VPWT), and 351–376 (PNSE…SGLR). Low complexity-rich tracts occupy residues 32–48 (SPAS…CDGA) and 58–71 (SCSS…ATTP). In terms of domain architecture, bHLH spans 81-135 (GQRQSASEREKLRMRTLARALHELRRFLPPSLAPAGQSLTKIETLRLAIRYIGHL). Tandem repeats lie at residues 179 to 180 (GQ), 181 to 182 (GQ), 183 to 184 (GQ), 185 to 186 (GQ), 187 to 188 (GQ), 189 to 190 (GQ), 191 to 192 (GQ), 193 to 194 (GQ), 195 to 196 (GQ), 197 to 198 (GQ), 199 to 200 (GQ), 201 to 202 (GQ), and 203 to 204 (GQ). Positions 179-204 (GQGQGQGQGQGQGQGQGQGQGQGQGQ) are 13 X 2 AA tandem repeats of G-Q. A compositionally biased stretch (gly residues) spans 180–206 (QGQGQGQGQGQGQGQGQGQGQGQGQGR). The span at 235–244 (RLGRGVHDTD) shows a compositional bias: basic and acidic residues. Composition is skewed to polar residues over residues 258 to 270 (PPYS…SDAS) and 365 to 375 (SEASPPQSSGL).

Degraded by the proteasome.

It localises to the nucleus. Functionally, transcription factor with important role in somitogenesis. Defines the rostrocaudal patterning of the somite by participating in distinct Notch pathways. Also regulates the FGF signaling pathway. Specifies the rostral half of the somites. Generates rostro-caudal polarity of somites by down-regulating in the presumptive rostral domain DLL1, a Notch ligand. Participates in the segment border formation by activating in the anterior presomitic mesoderm LFNG, a negative regulator of DLL1-Notch signaling. Acts as a strong suppressor of Notch activity. Together with MESP1 is involved in the epithelialization of somitic mesoderm and in the development of cardiac mesoderm. The protein is Mesoderm posterior protein 2 (MESP2) of Homo sapiens (Human).